A 239-amino-acid polypeptide reads, in one-letter code: Pyridoxine 5'-phosphate synthase (239 aa).

N7 provides a ligand contact to 3-amino-2-oxopropyl phosphate. 9-10 is a binding site for 1-deoxy-D-xylulose 5-phosphate; it reads DH. A 3-amino-2-oxopropyl phosphate-binding site is contributed by R18. H43 serves as the catalytic Proton acceptor. 2 residues coordinate 1-deoxy-D-xylulose 5-phosphate: R45 and H50. The active-site Proton acceptor is E70. T100 is a binding site for 1-deoxy-D-xylulose 5-phosphate. H191 acts as the Proton donor in catalysis. Residues G192 and 213–214 contribute to the 3-amino-2-oxopropyl phosphate site; that span reads GH.

The protein belongs to the PNP synthase family. Homooctamer; tetramer of dimers.

The protein localises to the cytoplasm. It catalyses the reaction 3-amino-2-oxopropyl phosphate + 1-deoxy-D-xylulose 5-phosphate = pyridoxine 5'-phosphate + phosphate + 2 H2O + H(+). The protein operates within cofactor biosynthesis; pyridoxine 5'-phosphate biosynthesis; pyridoxine 5'-phosphate from D-erythrose 4-phosphate: step 5/5. In terms of biological role, catalyzes the complicated ring closure reaction between the two acyclic compounds 1-deoxy-D-xylulose-5-phosphate (DXP) and 3-amino-2-oxopropyl phosphate (1-amino-acetone-3-phosphate or AAP) to form pyridoxine 5'-phosphate (PNP) and inorganic phosphate. This is Pyridoxine 5'-phosphate synthase from Geotalea daltonii (strain DSM 22248 / JCM 15807 / FRC-32) (Geobacter daltonii).